Consider the following 317-residue polypeptide: Acetyl-coenzyme A carboxylase carboxyl transferase subunit alpha (317 aa).

The CoA carboxyltransferase C-terminal domain occupies 40 to 293 (LEVRVREAIL…GDVIANALAE (254 aa)).

It belongs to the AccA family. Acetyl-CoA carboxylase is a heterohexamer composed of biotin carboxyl carrier protein (AccB), biotin carboxylase (AccC) and two subunits each of ACCase subunit alpha (AccA) and ACCase subunit beta (AccD).

The protein resides in the cytoplasm. It catalyses the reaction N(6)-carboxybiotinyl-L-lysyl-[protein] + acetyl-CoA = N(6)-biotinyl-L-lysyl-[protein] + malonyl-CoA. Its pathway is lipid metabolism; malonyl-CoA biosynthesis; malonyl-CoA from acetyl-CoA: step 1/1. Its function is as follows. Component of the acetyl coenzyme A carboxylase (ACC) complex. First, biotin carboxylase catalyzes the carboxylation of biotin on its carrier protein (BCCP) and then the CO(2) group is transferred by the carboxyltransferase to acetyl-CoA to form malonyl-CoA. The protein is Acetyl-coenzyme A carboxylase carboxyl transferase subunit alpha of Rhizobium etli (strain CIAT 652).